A 497-amino-acid chain; its full sequence is Latent membrane protein 2 (497 aa).

The disordered stretch occupies residues 1–108; sequence MGSLEMVPMG…PPYSPRDDSS (108 aa). Over 1–123 the chain is Cytoplasmic; it reads MGSLEMVPMG…EAGRGSMNPV (123 aa). Residues 27–41 show a composition bias toward polar residues; that stretch reads NNSQYPSASGSSGNT. Residues 97-101 carry the PPxY motif motif; that stretch reads PPPPY. Tyr112 is modified (phosphotyrosine; by host). A helical transmembrane segment spans residues 124–144; it reads CLPVIVAPYLFWLAAIAASCF. Topologically, residues 145 to 147 are extracellular; it reads TAS. A helical transmembrane segment spans residues 148-168; it reads VSTVVTATGLALSLLLLAAVA. At 169–177 the chain is on the cytoplasmic side; that stretch reads SSYAAAQRK. A helical membrane pass occupies residues 178–198; the sequence is LLTPVTVLTAVVTFFAICLTW. At 199–211 the chain is on the extracellular side; the sequence is RIEDPPFNSLLFA. Residues 212-232 traverse the membrane as a helical segment; it reads LLAAAGGLQGIYVLVMLVLLI. Residues 233-241 are Cytoplasmic-facing; the sequence is LAYRRRWRR. Residues 242-262 traverse the membrane as a helical segment; the sequence is LTVCGGIMFLACVLVLIVDAV. Over 263–267 the chain is Extracellular; the sequence is LQLSP. Residues 268 to 288 traverse the membrane as a helical segment; it reads LLGAVTVVSMTLLLLAFVLWL. Residues 289–296 lie on the Cytoplasmic side of the membrane; that stretch reads SSPGGLGT. The chain crosses the membrane as a helical span at residues 297–317; sequence LGAALLTLAAALALLASLILG. Residue Thr318 is a topological domain, extracellular. Residues 319 to 339 traverse the membrane as a helical segment; that stretch reads LNLTTMFLLMLLWTLVVLLIC. Residues 340 to 354 lie on the Cytoplasmic side of the membrane; that stretch reads SSCSSCPLSKILLAR. The helical transmembrane segment at 355-375 threads the bilayer; the sequence is LFLYALALLLLASALIAGGSI. Residues 376 to 388 lie on the Extracellular side of the membrane; sequence LQTNFKSLSSTEF. Residues 389–409 traverse the membrane as a helical segment; it reads IPNLFCMLLLIVAGILFILAI. Over 410–422 the chain is Cytoplasmic; sequence LTEWGSGNRTYGP. The chain crosses the membrane as a helical span at residues 423–443; that stretch reads VFMCLGGLLTMVAGAVWLTVM. The Extracellular segment spans residues 444–449; that stretch reads TNTLLS. A helical transmembrane segment spans residues 450-470; that stretch reads AWILTAGFLIFLIGFALFGVI. The Cytoplasmic portion of the chain corresponds to 471–497; that stretch reads RCCRYCCYYCLTLESEERPPTPYRNTV.

Belongs to the herpesviridae LMP-2 family. In terms of assembly, the cytoplasmic N-terminal domain interacts with human SRC family protein tyrosine kinases SYK and LYN. Binds human ITCH, WWP2 and NEDD4L. Post-translationally, phosphorylated on cytoplasmic N-terminal tyrosine residues, possibly by human LYN. Can be ubiquitinated by human ITCH and WWP2 on the N-terminus in a lysine-independent manner.

It is found in the host cell membrane. The protein resides in the host endomembrane system. It localises to the host cytoplasm. The protein localises to the host perinuclear region. Functionally, maintains EBV latent infection of B-lymphocyte, by preventing lytic reactivation of the virus in response to surface immunoglobulin (sIg) cross-linking. Acts like a dominant negative inhibitor of the sIg-associated protein tyrosine kinases, LYN and SYK. Also blocks translocation of the B-cell antigen receptor (BCR) into lipid rafts, preventing the subsequent signaling and accelerated internalization of the BCR upon BCR cross-linking. Serves as a molecular scaffold to recruit SYK, LYN and E3 protein-ubiquitin ligases, such as ITCH and NEDD4L, leading to ubiquitination and potential degradation of both tyrosines kinases. Possesses a constitutive signaling activity in non-transformed cells, inducing bypass of normal B lymphocyte developmental checkpoints allowing immunoglobulin-negative cells to colonize peripheral lymphoid organs. Its function is as follows. May be a negative regulator of isoform LMP2A. This is Latent membrane protein 2 (LMP2) from Homo sapiens (Human).